We begin with the raw amino-acid sequence, 124 residues long: Max-like protein 1 (124 aa).

The span at 1-10 (MSDMSDLEDD) shows a compositional bias: acidic residues. Residues 1-44 (MSDMSDLEDDQTGHCGSGEHSGPFDPKRHAREQHNALERRRRDN) form a disordered region. The interval 29–42 (HAREQHNALERRRR) is basic motif. The region spanning 29-82 (HAREQHNALERRRRDNIKDMYTSLREVVPDANGERVQASRAVILKKAIESIEKG) is the bHLH domain. The span at 32–44 (EQHNALERRRRDN) shows a compositional bias: basic and acidic residues. The helix-loop-helix motif stretch occupies residues 43–82 (DNIKDMYTSLREVVPDANGERVQASRAVILKKAIESIEKG). Positions 86-113 (SATLSVDVAEQESKNAKLREEIARLKAK) form a coiled coil.

Belongs to the MAX family. In terms of assembly, heterodimer with mdl-1 in presence and absence of DNA. Interacts with tdpt-1; the interaction promotes axon regeneration after injury. Expressed in D-type motor neurons.

It is found in the nucleus. Functionally, transcriptional regulator which binds to the E box motif 5'-CACGTG-3', when in a heterodimeric complex with mdl-1. Involved in the control of lifespan in response to dietary restriction, the decline in protein homeostasis associated with normal aging and may overlap with the insulin-like signaling pathway. Involved in promoting infection by the microsporidian pathogen N.parisii. Required for the expression of svh-2 and the promotion of axon regeneration after injury. The sequence is that of Max-like protein 1 from Caenorhabditis elegans.